The following is a 248-amino-acid chain: 2,3-bisphosphoglycerate-dependent phosphoglycerate mutase (248 aa).

Residues 10–17 (RHGQSEWN), 23–24 (TG), arginine 62, 89–92 (ERHY), lysine 100, 116–117 (RR), and 183–184 (GN) each bind substrate. Histidine 11 (tele-phosphohistidine intermediate) is an active-site residue. Glutamate 89 acts as the Proton donor/acceptor in catalysis.

Belongs to the phosphoglycerate mutase family. BPG-dependent PGAM subfamily.

The enzyme catalyses (2R)-2-phosphoglycerate = (2R)-3-phosphoglycerate. Its pathway is carbohydrate degradation; glycolysis; pyruvate from D-glyceraldehyde 3-phosphate: step 3/5. Catalyzes the interconversion of 2-phosphoglycerate and 3-phosphoglycerate. In Corynebacterium diphtheriae (strain ATCC 700971 / NCTC 13129 / Biotype gravis), this protein is 2,3-bisphosphoglycerate-dependent phosphoglycerate mutase.